A 127-amino-acid chain; its full sequence is MYPHLTGLGIHDPKQIERYSLRQEAHKDVLKIYFHKQKGEFFAKSVKFKYPRQVKNVLVDSGSHKYKEVTEINRNLTLVIDELNKITKPAKVSELDVKQKILSDLRHLEKVVSSKIAEIEADLEKLK.

Belongs to the UPF0325 family.

This is UPF0325 protein VP2321 from Vibrio parahaemolyticus serotype O3:K6 (strain RIMD 2210633).